Reading from the N-terminus, the 459-residue chain is Putrescine aminotransferase (459 aa).

Pyridoxal 5'-phosphate is bound by residues 150–151 (GT) and glutamine 274. Lysine 300 is subject to N6-(pyridoxal phosphate)lysine. Residue threonine 332 coordinates pyridoxal 5'-phosphate.

It belongs to the class-III pyridoxal-phosphate-dependent aminotransferase family. Putrescine aminotransferase subfamily. Pyridoxal 5'-phosphate serves as cofactor.

It carries out the reaction an alkane-alpha,omega-diamine + 2-oxoglutarate = an omega-aminoaldehyde + L-glutamate. The enzyme catalyses putrescine + 2-oxoglutarate = 1-pyrroline + L-glutamate + H2O. The catalysed reaction is cadaverine + 2-oxoglutarate = 5-aminopentanal + L-glutamate. It functions in the pathway amine and polyamine degradation; putrescine degradation; 4-aminobutanal from putrescine (transaminase route): step 1/1. In terms of biological role, catalyzes the aminotransferase reaction from putrescine to 2-oxoglutarate, leading to glutamate and 4-aminobutanal, which spontaneously cyclizes to form 1-pyrroline. This is the first step in one of two pathways for putrescine degradation, where putrescine is converted into 4-aminobutanoate (gamma-aminobutyrate or GABA) via 4-aminobutanal. Also functions as a cadaverine transaminase in a a L-lysine degradation pathway to succinate that proceeds via cadaverine, glutarate and L-2-hydroxyglutarate. This chain is Putrescine aminotransferase, found in Salmonella heidelberg (strain SL476).